Reading from the N-terminus, the 444-residue chain is N-succinylarginine dihydrolase (444 aa).

Residues 19-28 (AGLSFGNVAS), asparagine 110, and 137-138 (HR) each bind substrate. Glutamate 174 is a catalytic residue. Substrate is bound at residue arginine 214. Histidine 250 is an active-site residue. Aspartate 252 and asparagine 362 together coordinate substrate. Cysteine 368 (nucleophile) is an active-site residue.

This sequence belongs to the succinylarginine dihydrolase family. As to quaternary structure, homodimer.

The catalysed reaction is N(2)-succinyl-L-arginine + 2 H2O + 2 H(+) = N(2)-succinyl-L-ornithine + 2 NH4(+) + CO2. It participates in amino-acid degradation; L-arginine degradation via AST pathway; L-glutamate and succinate from L-arginine: step 2/5. Its function is as follows. Catalyzes the hydrolysis of N(2)-succinylarginine into N(2)-succinylornithine, ammonia and CO(2). The protein is N-succinylarginine dihydrolase of Shewanella baltica (strain OS155 / ATCC BAA-1091).